The primary structure comprises 89 residues: UPF0298 protein GK1096 (89 aa).

This sequence belongs to the UPF0298 family.

It is found in the cytoplasm. This chain is UPF0298 protein GK1096, found in Geobacillus kaustophilus (strain HTA426).